The sequence spans 646 residues: Macrolide export ATP-binding/permease protein MacB (646 aa).

Residues 7–245 form the ABC transporter domain; that stretch reads IRLEDICKTF…EATLQPHEEI (239 aa). 43–50 contacts ATP; that stretch reads GASGSGKS. 4 helical membrane passes run 274–294, 528–548, 572–592, and 609–629; these read VLTL…LAIG, VAAI…LVSV, FIIE…ILGL, and FGPV…FGFL.

This sequence belongs to the ABC transporter superfamily. Macrolide exporter (TC 3.A.1.122) family. As to quaternary structure, homodimer.

Its subcellular location is the cell inner membrane. Functionally, non-canonical ABC transporter that contains transmembrane domains (TMD), which form a pore in the inner membrane, and an ATP-binding domain (NBD), which is responsible for energy generation. Confers resistance against macrolides. The protein is Macrolide export ATP-binding/permease protein MacB of Brucella abortus (strain 2308).